Reading from the N-terminus, the 626-residue chain is Phosphomethylpyrimidine synthase (626 aa).

Residues asparagine 237, methionine 266, tyrosine 295, histidine 331, 351 to 353 (SRG), 392 to 395 (DGLR), and glutamate 431 each bind substrate. Histidine 435 contacts Zn(2+). Residue tyrosine 458 coordinates substrate. Histidine 499 is a binding site for Zn(2+). The [4Fe-4S] cluster site is built by cysteine 579, cysteine 582, and cysteine 587.

This sequence belongs to the ThiC family. In terms of assembly, homodimer. [4Fe-4S] cluster serves as cofactor.

It catalyses the reaction 5-amino-1-(5-phospho-beta-D-ribosyl)imidazole + S-adenosyl-L-methionine = 4-amino-2-methyl-5-(phosphooxymethyl)pyrimidine + CO + 5'-deoxyadenosine + formate + L-methionine + 3 H(+). Its pathway is cofactor biosynthesis; thiamine diphosphate biosynthesis. Catalyzes the synthesis of the hydroxymethylpyrimidine phosphate (HMP-P) moiety of thiamine from aminoimidazole ribotide (AIR) in a radical S-adenosyl-L-methionine (SAM)-dependent reaction. The protein is Phosphomethylpyrimidine synthase of Cupriavidus necator (strain ATCC 17699 / DSM 428 / KCTC 22496 / NCIMB 10442 / H16 / Stanier 337) (Ralstonia eutropha).